We begin with the raw amino-acid sequence, 152 residues long: Ribosomal RNA large subunit methyltransferase H (152 aa).

Residues leucine 68, glycine 100, and 119–124 contribute to the S-adenosyl-L-methionine site; that span reads FGPMTW.

This sequence belongs to the RNA methyltransferase RlmH family. Homodimer.

Its subcellular location is the cytoplasm. It catalyses the reaction pseudouridine(1915) in 23S rRNA + S-adenosyl-L-methionine = N(3)-methylpseudouridine(1915) in 23S rRNA + S-adenosyl-L-homocysteine + H(+). Specifically methylates the pseudouridine at position 1915 (m3Psi1915) in 23S rRNA. The chain is Ribosomal RNA large subunit methyltransferase H from Rhodospirillum centenum (strain ATCC 51521 / SW).